Reading from the N-terminus, the 301-residue chain is Mitochondrial substrate carrier family protein X (301 aa).

Residues 1-23 lie on the Mitochondrial intermembrane side of the membrane; the sequence is MVQQQQQQQQIKKNQVKPPLYSN. Solcar repeat units lie at residues 18-109, 117-199, and 208-296; these read PPLY…FRTR, IKLW…MKHN, and IGLP…QKSF. A helical membrane pass occupies residues 24–44; the sequence is LIAGAIAGVIGSSVVFPLDFV. The Mitochondrial matrix portion of the chain corresponds to 45 to 75; that stretch reads KTRLQQQRVSIDGSKQYNGIIDCFKKVIKNE. Residues 76-97 form a helical membrane-spanning segment; sequence GGVRGLYRGLSSNLIGIIPEKA. The Mitochondrial intermembrane portion of the chain corresponds to 98–122; it reads LKLAMNDYFRTRFQGDRSYIKLWEE. Residues 123-143 traverse the membrane as a helical segment; it reads VASGGLAGMCQVVATNPMELV. Topologically, residues 144–173 are mitochondrial matrix; that stretch reads KIRMQVSGLSGKKASLKEVVSELGIKGLYK. A helical transmembrane segment spans residues 174–194; sequence GTASTLLRDVPFSMIYFSIYG. Over 195–207 the chain is Mitochondrial intermembrane; sequence RMKHNLTDQETGE. Residues 208 to 228 form a helical membrane-spanning segment; the sequence is IGLPKILLCGITAGSIAASVS. Residues 229 to 271 lie on the Mitochondrial matrix side of the membrane; sequence TPFDVIKTRIQVKPGPNDPHYKGIADCFRKTIQSEGPKALFKG. Residues 272 to 292 traverse the membrane as a helical segment; that stretch reads VLPRVCIISPLFGITLVVYEI. At 293 to 301 the chain is on the mitochondrial intermembrane side; it reads QKSFYASTH.

Belongs to the mitochondrial carrier (TC 2.A.29) family.

The protein localises to the mitochondrion inner membrane. Functionally, mitochondrial solute carriers shuttle metabolites, nucleotides, and cofactors through the mitochondrial inner membrane. In Dictyostelium discoideum (Social amoeba), this protein is Mitochondrial substrate carrier family protein X (mcfX).